Reading from the N-terminus, the 269-residue chain is RBPJ-interacting and tubulin-associated protein 1 (269 aa).

The Nuclear export signal motif lies at 5 to 17 (VELAVSGIQTLPL). 2 disordered regions span residues 37–101 (SLFG…NKYR) and 141–269 (FWTP…PPWK). Polar residues predominate over residues 62-77 (RTSGVGTGTSRASGAN). Low complexity predominate over residues 79–93 (SCETTSSSGSTPTLT). Residues 92 to 108 (LTPRKKNKYRLISHTPS) carry the Nuclear localization signal motif. Residues 128–156 (WMAKGDAAKLHSLFWTPPATPRGSHSPRP) form an interaction with RBPJ/RBPSUH region. The tract at residues 156–269 (PRETPLRAIH…ATQKPKPPWK (114 aa)) is interaction with tubulin.

It belongs to the RITA family. Interacts with RBPJ/RBPSUH.

It localises to the cytoplasm. The protein localises to the nucleus. It is found in the cytoskeleton. The protein resides in the microtubule organizing center. Its subcellular location is the centrosome. Tubulin-binding protein that acts as a negative regulator of Notch signaling pathway. Shuttles between the cytoplasm and the nucleus and mediates the nuclear export of RBPJ/RBPSUH, thereby preventing the interaction between RBPJ/RBPSUH and NICD product of Notch proteins (Notch intracellular domain), leading to down-regulate Notch-mediated transcription. May play a role in neurogenesis. The polypeptide is RBPJ-interacting and tubulin-associated protein 1 (RITA1) (Ailuropoda melanoleuca (Giant panda)).